The following is an 895-amino-acid chain: DNA mismatch repair protein MutS (895 aa).

Position 607 to 614 (607 to 614) interacts with ATP; sequence GPNMSGKS.

The protein belongs to the DNA mismatch repair MutS family.

This protein is involved in the repair of mismatches in DNA. It is possible that it carries out the mismatch recognition step. This protein has a weak ATPase activity. The protein is DNA mismatch repair protein MutS of Bacillus cytotoxicus (strain DSM 22905 / CIP 110041 / 391-98 / NVH 391-98).